The primary structure comprises 461 residues: Photosystem II CP43 reaction center protein (461 aa).

Residues 1–2 (ME) constitute a propeptide that is removed on maturation. Residue T3 is modified to N-acetylthreonine. T3 is modified (phosphothreonine). The next 5 helical transmembrane spans lie at 57–81 (LFEV…PHLA), 122–143 (LLGP…KDRN), 166–188 (KALY…RKIT), 243–263 (KPFA…LSYS), and 279–300 (WFNN…ASQA). E355 serves as a coordination point for [CaMn4O5] cluster. The helical transmembrane segment at 435 to 459 (RARAAAAGFEKGIDRDFEPVLSMTP) threads the bilayer.

Belongs to the PsbB/PsbC family. PsbC subfamily. As to quaternary structure, PSII is composed of 1 copy each of membrane proteins PsbA, PsbB, PsbC, PsbD, PsbE, PsbF, PsbH, PsbI, PsbJ, PsbK, PsbL, PsbM, PsbT, PsbX, PsbY, PsbZ, Psb30/Ycf12, at least 3 peripheral proteins of the oxygen-evolving complex and a large number of cofactors. It forms dimeric complexes. It depends on Binds multiple chlorophylls and provides some of the ligands for the Ca-4Mn-5O cluster of the oxygen-evolving complex. It may also provide a ligand for a Cl- that is required for oxygen evolution. PSII binds additional chlorophylls, carotenoids and specific lipids. as a cofactor.

It is found in the plastid. It localises to the chloroplast thylakoid membrane. Its function is as follows. One of the components of the core complex of photosystem II (PSII). It binds chlorophyll and helps catalyze the primary light-induced photochemical processes of PSII. PSII is a light-driven water:plastoquinone oxidoreductase, using light energy to abstract electrons from H(2)O, generating O(2) and a proton gradient subsequently used for ATP formation. In Nicotiana sylvestris (Wood tobacco), this protein is Photosystem II CP43 reaction center protein.